Consider the following 633-residue polypeptide: MSYEFDENFDVIVVGAGHAGVEASLAAARMGCKVLLATINLEMLAFMPCNPSIGGSAKGIVVREIDALGGEMGKNIDKTYIQMKMLNTGKGPAVRALRAQADKALYAMTMKHTVERQENLTLRQSMVDEILVEDSKVVGVRTATNQKYGAKAVVVTTGTALRGEIIIGDLKYSSGPNNSLASVTLADNLKELGLEIGRFKTGTPPRVKASSINYEETEIQPGDEKPNHFSFLSKDEDYLQDQIPCWLTYTNQESHDIINNNLHRAPMFSGIVKGVGPRYCPSIEDKIVRFADKNRHQLFLEPEGRETEEVYVQGLSTSLPEDVQKELIHSIKGLEKAEMIRTGYAIEYDIVLPHQLRATLETKLISGLFTAGQTNGTSGYEEAAGQGLVAGINAALKVQGKPELILKRSDAYIGVMIDDLVTKGTLEPYRLLTSRAEYRLILRHDNADMRLTPIGREVGLVDDERWNIFKIKKNQFDRELTRLSKEKLKPIKETNEKIQALGFKPLTDAMTAKEFMRRPEIDYATATQFVGPAAEDLDAKVIELLETEIKYEGYINKALDQVAKMKRMEEKKIPENIDWDAIDSIATEARQKFKKINPETIGQASRISGVNPADISILMVYLEGNNKARRKVD.

Residues 15–20, V127, and S182 contribute to the FAD site; that span reads GAGHAG. 276-290 provides a ligand contact to NAD(+); sequence GPRYCPSIEDKIVRF. Q373 contributes to the FAD binding site.

It belongs to the MnmG family. In terms of assembly, homodimer. Heterotetramer of two MnmE and two MnmG subunits. It depends on FAD as a cofactor.

Its subcellular location is the cytoplasm. Its function is as follows. NAD-binding protein involved in the addition of a carboxymethylaminomethyl (cmnm) group at the wobble position (U34) of certain tRNAs, forming tRNA-cmnm(5)s(2)U34. This is tRNA uridine 5-carboxymethylaminomethyl modification enzyme MnmG from Streptococcus thermophilus (strain CNRZ 1066).